The following is an 81-amino-acid chain: Antitoxin MT2731 (81 aa).

In terms of biological role, antitoxin component of a type II toxin-antitoxin (TA) system. Neutralizes the effect of cognate toxin MT2730. The polypeptide is Antitoxin MT2731 (Mycobacterium tuberculosis (strain CDC 1551 / Oshkosh)).